The primary structure comprises 324 residues: tRNA U34 carboxymethyltransferase (324 aa).

Residues Lys-91, Trp-105, Lys-110, Gly-130, 152–154, 181–182, Met-196, Tyr-200, and Arg-315 contribute to the carboxy-S-adenosyl-L-methionine site; these read DPS and IE.

It belongs to the class I-like SAM-binding methyltransferase superfamily. CmoB family. In terms of assembly, homotetramer.

The catalysed reaction is carboxy-S-adenosyl-L-methionine + 5-hydroxyuridine(34) in tRNA = 5-carboxymethoxyuridine(34) in tRNA + S-adenosyl-L-homocysteine + H(+). Catalyzes carboxymethyl transfer from carboxy-S-adenosyl-L-methionine (Cx-SAM) to 5-hydroxyuridine (ho5U) to form 5-carboxymethoxyuridine (cmo5U) at position 34 in tRNAs. In Aliivibrio salmonicida (strain LFI1238) (Vibrio salmonicida (strain LFI1238)), this protein is tRNA U34 carboxymethyltransferase.